The following is a 330-amino-acid chain: tRNA-modifying protein YgfZ (330 aa).

Trp-28 and Trp-190 together coordinate folate.

This sequence belongs to the tRNA-modifying YgfZ family.

The protein localises to the cytoplasm. Its function is as follows. Folate-binding protein involved in regulating the level of ATP-DnaA and in the modification of some tRNAs. It is probably a key factor in regulatory networks that act via tRNA modification, such as initiation of chromosomal replication. The chain is tRNA-modifying protein YgfZ from Yersinia pseudotuberculosis serotype O:1b (strain IP 31758).